Consider the following 421-residue polypeptide: RNase J-like protein (421 aa).

Zn(2+) contacts are provided by His55, His57, Asp59, His60, His132, Asp153, and His389.

It belongs to the metallo-beta-lactamase superfamily. RNA-metabolizing metallo-beta-lactamase-like family. Forms homodimers on heating to 60 degrees Celsius which may be the active form. Zn(2+) is required as a cofactor.

Its activity is regulated as follows. Inhibited by imidazole. A 5'-3' exoribonuclease with a strong reference for 5'-monophosphorylated RNA and no endoribonuclease activty. The chain is RNase J-like protein from Methanocaldococcus jannaschii (strain ATCC 43067 / DSM 2661 / JAL-1 / JCM 10045 / NBRC 100440) (Methanococcus jannaschii).